The sequence spans 1463 residues: Nucleoporin NUP152 (1463 aa).

Disordered stretches follow at residues 1 to 199 (MDPP…GRPG), 339 to 568 (GIPD…ELPA), and 609 to 1064 (TTKK…FGNT). 6 stretches are compositionally biased toward polar residues: residues 32 to 42 (STNSNSVTANA), 81 to 92 (GPSSKLSQSVSA), 144 to 155 (TSSKATSFSGAP), 175 to 191 (TTYT…QSFP), 367 to 378 (PSSSTFTHTASP), and 416 to 472 (PAKT…SSNI). Over residues 481–498 (KDEDNESDTGSEAEAEDE) the composition is skewed to acidic residues. 2 stretches are compositionally biased toward low complexity: residues 511–523 (GASS…GGES) and 616–630 (AAAP…TPTT). Polar residues-rich tracts occupy residues 651–664 (IFGS…TSIP), 673–689 (PATS…TSAA), and 720–746 (TTES…TQPQ). The FXFG 1 repeat unit spans residues 729 to 732 (FQFG). A compositionally biased stretch (low complexity) spans 753 to 768 (KPPSTETPTEKPATTS). Positions 777-789 (PATTSSLFGSATT) are enriched in polar residues. Low complexity predominate over residues 803–813 (TTTPADKPTTT). A compositionally biased stretch (polar residues) spans 814 to 828 (NLFGSTSTQATSGSD). Residues 835–838 (FAFG) form an FXFG 2 repeat. The span at 840 to 863 (TTESKPTTSLFGSTTPAPATSTEN) shows a compositional bias: polar residues. Low complexity predominate over residues 870 to 881 (ATTTSATPATNT). 5 stretches are compositionally biased toward polar residues: residues 900 to 923 (GSST…STEQ), 940 to 961 (GSTS…TMTE), 968 to 987 (SIST…STTE), 998 to 1029 (STEQ…STEQ), and 1037 to 1055 (PAST…TTEN). An FXFG 3 repeat occupies 910-913 (FQFG). FXFG repeat units follow at residues 1074–1077 (FNFG), 1127–1130 (FNFG), 1141–1144 (FTFG), and 1152–1155 (FTFG). 2 disordered regions span residues 1155 to 1174 (GASS…PIFS) and 1179 to 1217 (QPSS…KHVP). Over residues 1156–1170 (ASSDSSNASNNASSA) the composition is skewed to low complexity. Residues 1173-1176 (FSFG) form an FXFG 8 repeat. The span at 1179–1199 (QPSSTPLFGQNNPPAASNIFA) shows a compositional bias: polar residues. The stretch at 1236-1239 (FTFG) is one FXFG 9 repeat. The segment covering 1240–1271 (GASSLATTPAASTPEPSAANAAAAGEDQGASA) has biased composition (low complexity). Disordered stretches follow at residues 1240 to 1335 (GASS…PWKV) and 1416 to 1463 (AALE…DEKK). A RanBD1 domain is found at 1289 to 1427 (GEEDESVVHE…LEEHKKANEK (139 aa)). The span at 1418-1463 (LEEHKKANEKKDGEKNEESEKKDEKQEEKKNEEKKDEKEEKKDEKK) shows a compositional bias: basic and acidic residues.

In terms of assembly, the nuclear pore complex (NPC) constitutes the exclusive means of nucleocytoplasmic transport. NPCs allow the passive diffusion of ions and small molecules and the active, nuclear transport receptor-mediated bidirectional transport of macromolecules such as proteins, RNAs, ribonucleoparticles (RNPs), and ribosomal subunits across the nuclear envelope. The 55-60 MDa NPC is composed of at least 28 different subunits: AMO1, ELYS, GLE1, GLE2, MLP1, NDC1, NIC96, NSP1, NUP133, NUP145, NUP152, NUP159, NUP170, NUP188, NUP192, NUP37, NUP49, NUP53, NUP56, NUP57, NUP82, NUP84, NUP85, POM152, POM33, POM34, SEC13 and SEH1. Due to its 8-fold rotational symmetry, all subunits are present with 8 copies or multiples thereof.

The protein localises to the nucleus. It is found in the nuclear pore complex. The protein resides in the nucleus membrane. Functions as a component of the nuclear pore complex (NPC). NPC components, collectively referred to as nucleoporins (NUPs), can play the role of both NPC structural components and of docking or interaction partners for transiently associated nuclear transport factors. Active directional transport is assured by both, a Phe-Gly (FG) repeat affinity gradient for these transport factors across the NPC and a transport cofactor concentration gradient across the nuclear envelope (GSP1 and GSP2 GTPases associated predominantly with GTP in the nucleus, with GDP in the cytoplasm). The sequence is that of Nucleoporin NUP152 (NUP152) from Chaetomium thermophilum (strain DSM 1495 / CBS 144.50 / IMI 039719) (Thermochaetoides thermophila).